The primary structure comprises 98 residues: NADH-ubiquinone oxidoreductase chain 4L (98 aa).

The next 3 membrane-spanning stretches (helical) occupy residues 1 to 21, 29 to 49, and 61 to 81; these read MSLT…GLLM, SLLC…MTIL, and IILL…LVMV.

Belongs to the complex I subunit 4L family. Core subunit of respiratory chain NADH dehydrogenase (Complex I) which is composed of 45 different subunits.

The protein resides in the mitochondrion inner membrane. The enzyme catalyses a ubiquinone + NADH + 5 H(+)(in) = a ubiquinol + NAD(+) + 4 H(+)(out). Core subunit of the mitochondrial membrane respiratory chain NADH dehydrogenase (Complex I) which catalyzes electron transfer from NADH through the respiratory chain, using ubiquinone as an electron acceptor. Part of the enzyme membrane arm which is embedded in the lipid bilayer and involved in proton translocation. This Stenoderma rufum (Red fruit bat) protein is NADH-ubiquinone oxidoreductase chain 4L (MT-ND4L).